A 638-amino-acid chain; its full sequence is LIM domain kinase 2 (638 aa).

2 consecutive LIM zinc-binding domains span residues 12-63 (CRGC…CHKD) and 72-124 (CHGC…CGKC). In terms of domain architecture, PDZ spans 152–239 (LISMPATTEC…TLQLLIEHDP (88 aa)). Threonine 210 is modified (phosphothreonine). Residues 257 to 266 (MQSSGHTLML) are compositionally biased toward polar residues. The segment at 257–304 (MQSSGHTLMLSTLDAKENQEGTLRRRSLRRSNSISKSPGPSSPKEPLL) is disordered. The span at 270 to 279 (DAKENQEGTL) shows a compositional bias: basic and acidic residues. A compositionally biased stretch (low complexity) spans 286 to 304 (RSNSISKSPGPSSPKEPLL). Phosphoserine occurs at positions 293 and 298. The Protein kinase domain maps to 331 to 608 (LIHGEVLGKG…DSFEALSLFL (278 aa)). Residues 337-345 (LGKGFFGQA) and lysine 360 contribute to the ATP site. Aspartate 451 is a catalytic residue. Threonine 505 is subject to Phosphothreonine; by ROCK1 and CDC42BP.

It belongs to the protein kinase superfamily. TKL Ser/Thr protein kinase family. Binds ROCK1 and MARF1. Interacts with NISCH. Phosphorylated on serine and/or threonine residues by ROCK1. As to expression, found in various tissues at moderate levels, except for testis, which shows very low expression.

It localises to the cytoplasm. Its subcellular location is the nucleus. The protein localises to the perinuclear region. It is found in the cytoskeleton. The protein resides in the spindle. It localises to the microtubule organizing center. Its subcellular location is the centrosome. The enzyme catalyses L-seryl-[protein] + ATP = O-phospho-L-seryl-[protein] + ADP + H(+). The catalysed reaction is L-threonyl-[protein] + ATP = O-phospho-L-threonyl-[protein] + ADP + H(+). Serine/threonine-protein kinase that plays an essential role in the regulation of actin filament dynamics. Acts downstream of several Rho family GTPase signal transduction pathways. Involved in astral microtubule organization and mitotic spindle orientation during early stages of mitosis by mediating phosphorylation of TPPP. Displays serine/threonine-specific phosphorylation of myelin basic protein and histone (MBP) in vitro. Suppresses ciliogenesis via multiple pathways; phosphorylation of CFL1, directional trafficking of ciliary vesicles to the ciliary base, and by facilitating YAP1 nuclear localization where it acts as a transcriptional corepressor of the TEAD4 target genes AURKA and PLK1. This Rattus norvegicus (Rat) protein is LIM domain kinase 2 (Limk2).